The following is a 280-amino-acid chain: Ribosomal RNA small subunit methyltransferase A (280 aa).

Residues N27, L29, G54, E76, D102, and N122 each coordinate S-adenosyl-L-methionine.

The protein belongs to the class I-like SAM-binding methyltransferase superfamily. rRNA adenine N(6)-methyltransferase family. RsmA subfamily.

It localises to the cytoplasm. The enzyme catalyses adenosine(1518)/adenosine(1519) in 16S rRNA + 4 S-adenosyl-L-methionine = N(6)-dimethyladenosine(1518)/N(6)-dimethyladenosine(1519) in 16S rRNA + 4 S-adenosyl-L-homocysteine + 4 H(+). Functionally, specifically dimethylates two adjacent adenosines (A1518 and A1519) in the loop of a conserved hairpin near the 3'-end of 16S rRNA in the 30S particle. May play a critical role in biogenesis of 30S subunits. The chain is Ribosomal RNA small subunit methyltransferase A from Oleidesulfovibrio alaskensis (strain ATCC BAA-1058 / DSM 17464 / G20) (Desulfovibrio alaskensis).